A 393-amino-acid chain; its full sequence is S-adenosylmethionine synthase 2 (393 aa).

E9 is a Mg(2+) binding site. Residue H15 coordinates ATP. E43 contacts K(+). E56 and Q99 together coordinate L-methionine. ATP-binding positions include 167 to 169 (DGK), 235 to 238 (SGRF), D246, 252 to 253 (RK), A269, K273, and K277. An L-methionine-binding site is contributed by D246. Position 277 (K277) interacts with L-methionine.

This sequence belongs to the AdoMet synthase family. In terms of assembly, homotetramer. The cofactor is Mn(2+). Mg(2+) is required as a cofactor. Co(2+) serves as cofactor. Requires K(+) as cofactor. Mostly expressed in roots. Also present in stems and leaves.

The protein localises to the cytoplasm. The catalysed reaction is L-methionine + ATP + H2O = S-adenosyl-L-methionine + phosphate + diphosphate. It participates in amino-acid biosynthesis; S-adenosyl-L-methionine biosynthesis; S-adenosyl-L-methionine from L-methionine: step 1/1. In terms of biological role, catalyzes the formation of S-adenosylmethionine from methionine and ATP. The reaction comprises two steps that are both catalyzed by the same enzyme: formation of S-adenosylmethionine (AdoMet) and triphosphate, and subsequent hydrolysis of the triphosphate. The sequence is that of S-adenosylmethionine synthase 2 (SAM2) from Solanum lycopersicum (Tomato).